Here is a 690-residue protein sequence, read N- to C-terminus: Methionine--tRNA ligase (690 aa).

Residues 12–22 carry the 'HIGH' region motif; that stretch reads PYANGPLHLGH. C144, C147, C157, and C160 together coordinate Zn(2+). The short motif at 333–337 is the 'KMSKS' region element; that stretch reads QFSKS. K336 is an ATP binding site. The 98-residue stretch at 535–632 folds into the tRNA-binding domain; the sequence is KKINIDLMVG…VNADDGSRMK (98 aa).

This sequence belongs to the class-I aminoacyl-tRNA synthetase family. MetG type 1 subfamily. In terms of assembly, homodimer. Zn(2+) serves as cofactor.

It is found in the cytoplasm. The catalysed reaction is tRNA(Met) + L-methionine + ATP = L-methionyl-tRNA(Met) + AMP + diphosphate. Its function is as follows. Is required not only for elongation of protein synthesis but also for the initiation of all mRNA translation through initiator tRNA(fMet) aminoacylation. The polypeptide is Methionine--tRNA ligase (Picrophilus torridus (strain ATCC 700027 / DSM 9790 / JCM 10055 / NBRC 100828 / KAW 2/3)).